We begin with the raw amino-acid sequence, 265 residues long: 4-hydroxy-tetrahydrodipicolinate reductase (265 aa).

NAD(+) contacts are provided by residues 7 to 12 and D33; that span reads GASGRM. Residue R34 participates in NADP(+) binding. NAD(+) is bound by residues 96 to 98 and 120 to 123; these read GTT and AANM. H153 serves as the catalytic Proton donor/acceptor. H154 is a binding site for (S)-2,3,4,5-tetrahydrodipicolinate. The Proton donor role is filled by K157. 163–164 is a (S)-2,3,4,5-tetrahydrodipicolinate binding site; it reads GT.

The protein belongs to the DapB family.

It is found in the cytoplasm. The catalysed reaction is (S)-2,3,4,5-tetrahydrodipicolinate + NAD(+) + H2O = (2S,4S)-4-hydroxy-2,3,4,5-tetrahydrodipicolinate + NADH + H(+). It catalyses the reaction (S)-2,3,4,5-tetrahydrodipicolinate + NADP(+) + H2O = (2S,4S)-4-hydroxy-2,3,4,5-tetrahydrodipicolinate + NADPH + H(+). The protein operates within amino-acid biosynthesis; L-lysine biosynthesis via DAP pathway; (S)-tetrahydrodipicolinate from L-aspartate: step 4/4. Functionally, catalyzes the conversion of 4-hydroxy-tetrahydrodipicolinate (HTPA) to tetrahydrodipicolinate. This is 4-hydroxy-tetrahydrodipicolinate reductase from Burkholderia ambifaria (strain ATCC BAA-244 / DSM 16087 / CCUG 44356 / LMG 19182 / AMMD) (Burkholderia cepacia (strain AMMD)).